The primary structure comprises 260 residues: Segregation and condensation protein A (260 aa).

The protein belongs to the ScpA family. As to quaternary structure, component of a cohesin-like complex composed of ScpA, ScpB and the Smc homodimer, in which ScpA and ScpB bind to the head domain of Smc. The presence of the three proteins is required for the association of the complex with DNA.

The protein resides in the cytoplasm. Functionally, participates in chromosomal partition during cell division. May act via the formation of a condensin-like complex containing Smc and ScpB that pull DNA away from mid-cell into both cell halves. The sequence is that of Segregation and condensation protein A from Halalkalibacterium halodurans (strain ATCC BAA-125 / DSM 18197 / FERM 7344 / JCM 9153 / C-125) (Bacillus halodurans).